The chain runs to 497 residues: Glycerol kinase (497 aa).

An ADP-binding site is contributed by T12. 3 residues coordinate ATP: T12, T13, and S14. T12 is a sn-glycerol 3-phosphate binding site. Residue R16 coordinates ADP. Sn-glycerol 3-phosphate contacts are provided by R82, E83, Y134, and D243. 5 residues coordinate glycerol: R82, E83, Y134, D243, and Q244. Residues T265 and G308 each coordinate ADP. T265, G308, Q312, and G409 together coordinate ATP. The ADP site is built by G409 and N413.

Belongs to the FGGY kinase family. As to quaternary structure, homotetramer and homodimer (in equilibrium).

The catalysed reaction is glycerol + ATP = sn-glycerol 3-phosphate + ADP + H(+). It participates in polyol metabolism; glycerol degradation via glycerol kinase pathway; sn-glycerol 3-phosphate from glycerol: step 1/1. Its activity is regulated as follows. Activated by phosphorylation and inhibited by fructose 1,6-bisphosphate (FBP). Key enzyme in the regulation of glycerol uptake and metabolism. Catalyzes the phosphorylation of glycerol to yield sn-glycerol 3-phosphate. In Caldanaerobacter subterraneus subsp. tengcongensis (strain DSM 15242 / JCM 11007 / NBRC 100824 / MB4) (Thermoanaerobacter tengcongensis), this protein is Glycerol kinase.